The sequence spans 221 residues: Bcl-2-related ovarian killer protein homolog A (221 aa).

Residues 32–44 (KVLCRDYIHSRLH) carry the BH4 motif. Positions 64 to 80 (VSSVLLWLGDELEYLRP) match the BH3 motif. Residues 110–140 (EIFSTEYSRKGLEKHKGVTWGKIVSLYAVAG) carry the BH1 motif. Positions 173-187 (WLKKRGGWADITKCV) match the BH2 motif. A helical transmembrane segment spans residues 198–218 (WLVTAACACGHYLKAVVFYLL).

This sequence belongs to the Bcl-2 family. Strongest expression in ovary and eye, weaker expression in gut, kidney and brain. Little expression in liver or heart.

Its subcellular location is the membrane. Its function is as follows. May play a role in apoptosis. Does not appear to show pro-apoptotic activity when expressed ectopically in early embryos. In Danio rerio (Zebrafish), this protein is Bcl-2-related ovarian killer protein homolog A.